We begin with the raw amino-acid sequence, 263 residues long: uncharacterized protein (263 aa).

Position 31-38 (31-38 (GPTGSGKT)) interacts with ATP.

This sequence belongs to the CbbQ/NirQ/NorQ/GpvN family.

This is an uncharacterized protein from Staphylococcus aureus (strain NCTC 8325 / PS 47).